Consider the following 358-residue polypeptide: Peptide chain release factor 1 (358 aa).

Gln-236 carries the post-translational modification N5-methylglutamine.

It belongs to the prokaryotic/mitochondrial release factor family. Post-translationally, methylated by PrmC. Methylation increases the termination efficiency of RF1.

Its subcellular location is the cytoplasm. Functionally, peptide chain release factor 1 directs the termination of translation in response to the peptide chain termination codons UAG and UAA. The sequence is that of Peptide chain release factor 1 from Corynebacterium glutamicum (strain ATCC 13032 / DSM 20300 / JCM 1318 / BCRC 11384 / CCUG 27702 / LMG 3730 / NBRC 12168 / NCIMB 10025 / NRRL B-2784 / 534).